The following is a 229-amino-acid chain: All-trans retinoic acid-induced differentiation factor (229 aa).

A signal peptide spans 1-30 (MAPHDPGSLTTLVPWAAALLLALGVERALA). The Extracellular segment spans residues 31–199 (LPEICTQCPG…YKCMRQGSFS (169 aa)). N-linked (GlcNAc...) asparagine glycosylation is found at Asn44, Asn79, Asn157, and Asn168. One can recognise an EGF-like domain in the interval 152-193 (QKNLCNNTGDPEMCPENGSCVPDGPGLLQCVCADGFHGYKCM). Cystine bridges form between Cys156–Cys171, Cys165–Cys181, and Cys183–Cys192. The chain crosses the membrane as a helical span at residues 200 to 220 (LLMFFGILGATTLSVSILLWA). Over 221-229 (TQRRKAKTS) the chain is Cytoplasmic.

As to quaternary structure, interacts with NELL1; the interaction promotes osteoblastic differentiation and mineralization. Interacts with SLC37A3; the interaction is direct and both proteins are mutually dependent for their stability. Weakly expressed in hematopoietic cell lines.

The protein localises to the nucleus envelope. It localises to the cell membrane. The protein resides in the lysosome membrane. In terms of biological role, promotes osteoblast cell differentiation and terminal mineralization. Plays a role in inducing the cell cycle arrest via inhibiting CCND1 expression in all-trans-retinoic acid (ATRA) signal pathway. In osteoclasts, forms a transporter complex with ATRAID for nitrogen-containing-bisphophonates (N-BPs) required for releasing N-BP molecules that have trafficked to lysosomes through fluid-phase endocytosis into the cytosol. This Homo sapiens (Human) protein is All-trans retinoic acid-induced differentiation factor.